The sequence spans 382 residues: Lipid-A-disaccharide synthase (382 aa).

Belongs to the LpxB family.

It carries out the reaction 2-N,3-O-bis[(3R)-3-hydroxytetradecanoyl]-alpha-D-glucosaminyl 1-phosphate + UDP-2-N,3-O-bis[(3R)-3-hydroxytetradecanoyl]-alpha-D-glucosamine = lipid A disaccharide (E. coli) + UDP + H(+). It catalyses the reaction a lipid X + a UDP-2-N,3-O-bis[(3R)-3-hydroxyacyl]-alpha-D-glucosamine = a lipid A disaccharide + UDP + H(+). It functions in the pathway glycolipid biosynthesis; lipid IV(A) biosynthesis; lipid IV(A) from (3R)-3-hydroxytetradecanoyl-[acyl-carrier-protein] and UDP-N-acetyl-alpha-D-glucosamine: step 5/6. In terms of biological role, condensation of UDP-2,3-diacylglucosamine and 2,3-diacylglucosamine-1-phosphate to form lipid A disaccharide, a precursor of lipid A, a phosphorylated glycolipid that anchors the lipopolysaccharide to the outer membrane of the cell. This Salmonella agona (strain SL483) protein is Lipid-A-disaccharide synthase.